We begin with the raw amino-acid sequence, 119 residues long: Iron-sulfur cluster insertion protein ErpA (119 aa).

Iron-sulfur cluster-binding residues include C47, C111, and C113.

It belongs to the HesB/IscA family. Homodimer. It depends on iron-sulfur cluster as a cofactor.

Its function is as follows. Required for insertion of 4Fe-4S clusters for at least IspG. In Alcanivorax borkumensis (strain ATCC 700651 / DSM 11573 / NCIMB 13689 / SK2), this protein is Iron-sulfur cluster insertion protein ErpA.